Consider the following 419-residue polypeptide: Acyl transferase 9 (419 aa).

Active-site proton acceptor residues include His-161 and Asp-362.

This sequence belongs to the plant acyltransferase family.

Involved in the incorporation of ferulate into the cell wall. May act as arabinoxylan feruloyl transferase. The polypeptide is Acyl transferase 9 (Oryza sativa subsp. japonica (Rice)).